A 566-amino-acid polypeptide reads, in one-letter code: Heat shock protein 70 homolog C57A7.12 (566 aa).

A39–T46 serves as a coordination point for ATP. 2 positions are modified to phosphoserine: S86 and S500.

The protein belongs to the heat shock protein 70 family.

In Schizosaccharomyces pombe (strain 972 / ATCC 24843) (Fission yeast), this protein is Heat shock protein 70 homolog C57A7.12.